Consider the following 1210-residue polypeptide: Epidermal growth factor receptor (1210 aa).

The first 24 residues, 1–24 (MRPSGTARTTLLVLLTALCAAGGA), serve as a signal peptide directing secretion. The Extracellular portion of the chain corresponds to 25–647 (LEEKKVCQGT…VWPSGPKIPS (623 aa)). Cys31 and Cys58 are joined by a disulfide. The Approximate repeat unit spans residues 75 to 300 (DLSFLKTIQE…CVKKCPRNYV (226 aa)). N-linked (GlcNAc...) asparagine glycosylation is found at Asn128, Asn175, and Asn196. Intrachain disulfides connect Cys157-Cys187, Cys190-Cys199, Cys194-Cys207, Cys215-Cys223, Cys219-Cys231, Cys232-Cys240, Cys236-Cys248, Cys251-Cys260, Cys264-Cys291, Cys295-Cys307, Cys311-Cys326, Cys329-Cys333, and Cys337-Cys362. Ser229 is modified (phosphoserine). N-linked (GlcNAc...) asparagine glycans are attached at residues Asn352, Asn413, and Asn444. Residues 390 to 600 (RELEILKTVK…CVKTCPAGIM (211 aa)) form an Approximate repeat. 11 cysteine pairs are disulfide-bonded: Cys470–Cys499, Cys506–Cys515, Cys510–Cys523, Cys526–Cys535, Cys539–Cys555, Cys558–Cys571, Cys562–Cys579, Cys582–Cys591, Cys595–Cys617, Cys620–Cys628, and Cys624–Cys636. An N-linked (GlcNAc...) asparagine glycan is attached at Asn528. Residue Asn568 is glycosylated (N-linked (GlcNAc...) asparagine). Residues Asn603 and Asn623 are each glycosylated (N-linked (GlcNAc...) asparagine). The chain crosses the membrane as a helical span at residues 648 to 670 (IATGIVGGLLFIVVVALGIGLFM). The Cytoplasmic segment spans residues 671-1210 (RRRHIVRKRT…APPSSEFIGA (540 aa)). Position 680 is a phosphothreonine; by PKC and PKD/PRKD1 (Thr680). The segment at 690–706 (LVEPLTPSGEAPNQAHL) is important for dimerization, phosphorylation and activation. A Phosphothreonine; by PKD/PRKD1 modification is found at Thr695. Ser697 is subject to Phosphoserine. Positions 714–981 (FKKIKVLGSG…KMARDPQRYL (268 aa)) constitute a Protein kinase domain. A Glycyl lysine isopeptide (Lys-Gly) (interchain with G-Cter in ubiquitin) cross-link involves residue Lys718. Residue 720–728 (LGSGAFGTV) coordinates ATP. Lys739 participates in a covalent cross-link: Glycyl lysine isopeptide (Lys-Gly) (interchain with G-Cter in ubiquitin). ATP is bound at residue Lys747. N6-(2-hydroxyisobutyryl)lysine is present on Lys747. Residues Lys756 and Lys759 each participate in a glycyl lysine isopeptide (Lys-Gly) (interchain with G-Cter in ubiquitin) cross-link. 792-793 (TQ) is an ATP binding site. Asp839 serves as the catalytic Proton acceptor. Asp857 serves as a coordination point for ATP. Lys869 participates in a covalent cross-link: Glycyl lysine isopeptide (Lys-Gly) (interchain with G-Cter in ubiquitin). Tyr871 carries the phosphotyrosine modification. Glycyl lysine isopeptide (Lys-Gly) (interchain with G-Cter in ubiquitin) cross-links involve residues Lys931, Lys962, and Lys972. Ser993 and Ser997 each carry phosphoserine. Phosphotyrosine; by autocatalysis is present on residues Tyr1000 and Tyr1018. Residues Ser1028 and Ser1041 each carry the phosphoserine modification. Thr1043 carries the phosphothreonine modification. Ser1044 bears the Phosphoserine mark. Cys1051 carries the S-palmitoyl cysteine lipid modification. Tyr1069 is subject to Phosphotyrosine. 2 positions are modified to phosphoserine: Ser1070 and Ser1071. 2 positions are modified to phosphotyrosine; by autocatalysis: Tyr1092 and Tyr1110. The segment at 1113–1137 (QPLHPAPGRDLHYQNPHSNAVGNPE) is disordered. Residues 1127–1137 (NPHSNAVGNPE) are compositionally biased toward polar residues. The S-palmitoyl cysteine moiety is linked to residue Cys1146. Ser1166 is subject to Phosphoserine. At Tyr1172 the chain carries Phosphotyrosine; by autocatalysis. A Phosphotyrosine modification is found at Tyr1197. At Arg1199 the chain carries Omega-N-methylarginine.

The protein belongs to the protein kinase superfamily. Tyr protein kinase family. EGF receptor subfamily. Binding of the ligand triggers homo- and/or heterodimerization of the receptor triggering its autophosphorylation. Heterodimer with ERBB2. Forms a complex with CCDC88A/GIV (via SH2-like region) and GNAI3 which leads to enhanced EGFR signaling and triggering of cell migration; binding of CCDC88A requires autophosphorylation of the EGFR C-terminal region, and ligand stimulation is required for recruitment of GNAI3 to the complex. Interacts with ERRFI1; inhibits dimerization of the kinase domain and autophosphorylation. Part of a complex with ERBB2 and either PIK3C2A or PIK3C2B. Interacts with GRB2; an adapter protein coupling the receptor to downstream signaling pathways. Interacts with GAB2; involved in signaling downstream of EGFR. Interacts with STAT3; mediates EGFR downstream signaling in cell proliferation. Interacts with RIPK1; involved in NF-kappa-B activation. Interacts (autophosphorylated) with CBL, CBLB and CBLC; involved in EGFR ubiquitination and regulation; interaction with CBL is reduced in the presence of tensin TNS4. Interacts with SOCS5; regulates EGFR degradation through ELOC- and ELOB-mediated ubiquitination and proteasomal degradation. Interacts with PRMT5; methylates EGFR and enhances interaction with PTPN6. Interacts (phosphorylated) with PTPN6; inhibits EGFR-dependent activation of MAPK/ERK. Interacts with COPG1; essential for regulation of EGF-dependent nuclear transport of EGFR by retrograde trafficking from the Golgi to the ER. Interacts with TNK2; this interaction is dependent on EGF stimulation and kinase activity of EGFR. Interacts with PCNA; positively regulates PCNA. Interacts with PELP1. Interacts with MUC1. Interacts with AP2M1. Interacts with FER. Interacts (via SH2 domains) with GRB2, NCK1 and NCK2. Interacts with EPS8; mediates EPS8 phosphorylation. Interacts with ATXN2. Interacts with GAREM1. Interacts (ubiquitinated) with ANKRD13A/B/D; the interaction is direct and may regulate EGFR internalization after EGF stimulation. Interacts with GPER1; the interaction occurs in an estrogen-dependent manner. Interacts (via C-terminal cytoplasmic kinase domain) with ZPR1 (via zinc fingers). Interacts with RNF115 and RNF126. Interacts with GPRC5A (via its transmembrane domain). Interacts with FAM83B; positively regulates EGFR inducing its autophosphorylation in absence of stimulation by EGF. Interacts with LAPTM4B; positively correlates with EGFR activation. Interacts with STX19. Interacts with CD44. Interacts with PGRMC1; the interaction requires PGRMC1 homodimerization. Interacts with PIKFYVE. Interacts with NEU3. Interacts with TRAF4. Interacts with the ant venom OMEGA-myrmeciitoxin(02)-Mg1a. Interacts with CD82; this interaction facilitates ligand-induced endocytosis of the receptor and its subsequent desensitization. Post-translationally, monoubiquitinated and polyubiquitinated upon EGF stimulation; which does not affect tyrosine kinase activity or signaling capacity but may play a role in lysosomal targeting. Polyubiquitin linkage is mainly through 'Lys-63', but linkage through 'Lys-48', 'Lys-11' and 'Lys-29' also occurs. Deubiquitinated by OTUD7B, preventing degradation. Ubiquitinated by RNF115 and RNF126. Ubiquitinated by ZNRF1 or CBL at different lysines in response to EGF stimulation; leading to recruitment of the ESCRT machinery and subsequent degradation in the lysosomes. Deubiquitinated by UCHL1 leading to the inhibition of its degradation. In terms of processing, phosphorylated on Tyr residues in response to EGF. Phosphorylation at Ser-697 is partial and occurs only if Thr-695 is phosphorylated. Phosphorylation at Thr-680 and Thr-695 by PRKD1 inhibits EGF-induced MAPK8/JNK1 activation. Dephosphorylation by PTPRJ prevents endocytosis and stabilizes the receptor at the plasma membrane. Autophosphorylation at Tyr-1199 is stimulated by methylation at Arg-1199 and enhances interaction with PTPN6. Autophosphorylation at Tyr-1092 and/or Tyr-1110 recruits STAT3. Dephosphorylated by PTPN1 and PTPN2. Palmitoylated on Cys residues by ZDHHC20. Palmitoylation inhibits internalization after ligand binding, and increases the persistence of tyrosine-phosphorylated EGFR at the cell membrane. Palmitoylation increases the amplitude and duration of EGFR signaling. Post-translationally, methylated. Methylation at Arg-1199 by PRMT5 stimulates phosphorylation at Tyr-1197.

The protein localises to the cell membrane. It localises to the endoplasmic reticulum membrane. The protein resides in the golgi apparatus membrane. It is found in the nucleus membrane. Its subcellular location is the endosome. The protein localises to the endosome membrane. It localises to the nucleus. The enzyme catalyses L-tyrosyl-[protein] + ATP = O-phospho-L-tyrosyl-[protein] + ADP + H(+). With respect to regulation, endocytosis and inhibition of the activated EGFR by phosphatases like PTPRJ and PTPRK constitute immediate regulatory mechanisms. Upon EGF-binding phosphorylates EPS15 that regulates EGFR endocytosis and activity. Moreover, inducible feedback inhibitors including LRIG1, SOCS4, SOCS5 and ERRFI1 constitute alternative regulatory mechanisms for the EGFR signaling. In terms of biological role, receptor tyrosine kinase binding ligands of the EGF family and activating several signaling cascades to convert extracellular cues into appropriate cellular responses. Known ligands include EGF, TGFA/TGF-alpha, AREG, epigen/EPGN, BTC/betacellulin, epiregulin/EREG and HBEGF/heparin-binding EGF. Ligand binding triggers receptor homo- and/or heterodimerization and autophosphorylation on key cytoplasmic residues. The phosphorylated receptor recruits adapter proteins like GRB2 which in turn activates complex downstream signaling cascades. Activates at least 4 major downstream signaling cascades including the RAS-RAF-MEK-ERK, PI3 kinase-AKT, PLCgamma-PKC and STATs modules. May also activate the NF-kappa-B signaling cascade. Also directly phosphorylates other proteins like RGS16, activating its GTPase activity and probably coupling the EGF receptor signaling to the G protein-coupled receptor signaling. Also phosphorylates MUC1 and increases its interaction with SRC and CTNNB1/beta-catenin. Positively regulates cell migration via interaction with CCDC88A/GIV which retains EGFR at the cell membrane following ligand stimulation, promoting EGFR signaling which triggers cell migration. Plays a role in enhancing learning and memory performance. Plays a role in mammalian pain signaling (long-lasting hypersensitivity). The polypeptide is Epidermal growth factor receptor (Mus musculus (Mouse)).